We begin with the raw amino-acid sequence, 876 residues long: Alanine--tRNA ligase (876 aa).

Zn(2+) is bound by residues histidine 566, histidine 570, cysteine 667, and histidine 671.

Belongs to the class-II aminoacyl-tRNA synthetase family. It depends on Zn(2+) as a cofactor.

It localises to the cytoplasm. The catalysed reaction is tRNA(Ala) + L-alanine + ATP = L-alanyl-tRNA(Ala) + AMP + diphosphate. Its function is as follows. Catalyzes the attachment of alanine to tRNA(Ala) in a two-step reaction: alanine is first activated by ATP to form Ala-AMP and then transferred to the acceptor end of tRNA(Ala). Also edits incorrectly charged Ser-tRNA(Ala) and Gly-tRNA(Ala) via its editing domain. This chain is Alanine--tRNA ligase, found in Albidiferax ferrireducens (strain ATCC BAA-621 / DSM 15236 / T118) (Rhodoferax ferrireducens).